Reading from the N-terminus, the 231-residue chain is Small ribosomal subunit protein uS3 (231 aa).

A KH type-2 domain is found at 39–107 (VREFLKEKLK…PAQINIAEVR (69 aa)).

Belongs to the universal ribosomal protein uS3 family. Part of the 30S ribosomal subunit. Forms a tight complex with proteins S10 and S14.

Binds the lower part of the 30S subunit head. Binds mRNA in the 70S ribosome, positioning it for translation. The polypeptide is Small ribosomal subunit protein uS3 (Colwellia psychrerythraea (strain 34H / ATCC BAA-681) (Vibrio psychroerythus)).